Here is a 64-residue protein sequence, read N- to C-terminus: Tracheal antimicrobial peptide (64 aa).

Positions 1-26 are cleaved as a signal peptide; that stretch reads MRLHHLLLALLFLVLSAWSGFTQGVG. Intrachain disulfides connect Cys-31–Cys-60, Cys-38–Cys-53, and Cys-43–Cys-61.

It belongs to the beta-defensin family. LAP/TAP subfamily. As to expression, tracheal epithelium.

It is found in the secreted. Has antibacterial activity in vitro against Escherichia coli, Staphylococcus aureus, Klebsiella pneumonia, and Pseudomonas aeruginosa. In addition, the peptide is active against Candida albicans, indicating a broad spectrum of activity. The chain is Tracheal antimicrobial peptide from Bos taurus (Bovine).